The following is a 556-amino-acid chain: Amidophosphoribosyltransferase (556 aa).

Positions 1 to 57 are excised as a propeptide; it reads MCLAVGVGVRAPKHVPQIRRLGRAGRRLRCVTNCALGSCPIVTVQQPGRDFSSPREE. Residue Cys-58 is the Nucleophile of the active site. In terms of domain architecture, Glutamine amidotransferase type-2 spans 58–284; that stretch reads CGVFGVWAPG…PGELLAIDAD (227 aa). Cys-299 is a [4Fe-4S] cluster binding site. Mg(2+) contacts are provided by Ser-346, Asp-408, and Asp-409. Residues Cys-445, Cys-501, and Cys-504 each contribute to the [4Fe-4S] cluster site.

It in the C-terminal section; belongs to the purine/pyrimidine phosphoribosyltransferase family. It depends on Mg(2+) as a cofactor. Requires [4Fe-4S] cluster as cofactor.

It catalyses the reaction 5-phospho-beta-D-ribosylamine + L-glutamate + diphosphate = 5-phospho-alpha-D-ribose 1-diphosphate + L-glutamine + H2O. Its pathway is purine metabolism; IMP biosynthesis via de novo pathway; N(1)-(5-phospho-D-ribosyl)glycinamide from 5-phospho-alpha-D-ribose 1-diphosphate: step 1/2. Its function is as follows. Catalyzes the formation of phosphoribosylamine from phosphoribosylpyrophosphate (PRPP) and glutamine. In Mycobacterium leprae (strain TN), this protein is Amidophosphoribosyltransferase.